We begin with the raw amino-acid sequence, 160 residues long: MKPRPPTMRIKKRYVLAAIVPNYPSIDSKVLYVAIAEAITGLYGDGAGAALHHAVVFAGDGYLIARCSRGSEQFLATALAVVTEVDGQRVAFRTLATSGTIHALRRRMRQPVERPEREDLEVDGVIYEVHVRESQKVDLIEKGCNSQKLLFLVEQDLQER.

It belongs to the eukaryotic/archaeal RNase P protein component 2 family. As to quaternary structure, consists of a catalytic RNA component and at least 4-5 protein subunits.

The protein localises to the cytoplasm. It catalyses the reaction Endonucleolytic cleavage of RNA, removing 5'-extranucleotides from tRNA precursor.. Functionally, part of ribonuclease P, a protein complex that generates mature tRNA molecules by cleaving their 5'-ends. In Methanosphaerula palustris (strain ATCC BAA-1556 / DSM 19958 / E1-9c), this protein is Ribonuclease P protein component 2.